The primary structure comprises 348 residues: GMP reductase (348 aa).

Position 108 to 131 (108 to 131) interacts with NADP(+); sequence ADFQKTKDIMALSDELIFICVDIA. K(+)-binding residues include Gly181 and Gly183. The active-site Thioimidate intermediate is Cys186. 216–239 provides a ligand contact to NADP(+); the sequence is IIGDGGCSCAGDVSKAFGGGADFV.

The protein belongs to the IMPDH/GMPR family. GuaC type 1 subfamily. Homotetramer.

The enzyme catalyses IMP + NH4(+) + NADP(+) = GMP + NADPH + 2 H(+). Its function is as follows. Catalyzes the irreversible NADPH-dependent deamination of GMP to IMP. It functions in the conversion of nucleobase, nucleoside and nucleotide derivatives of G to A nucleotides, and in maintaining the intracellular balance of A and G nucleotides. This is GMP reductase from Vibrio parahaemolyticus serotype O3:K6 (strain RIMD 2210633).